We begin with the raw amino-acid sequence, 428 residues long: Elongation factor 1-alpha (428 aa).

A tr-type G domain is found at 5-225 (KPILNVAFIG…DGFQPPEKPT (221 aa)). Residues 14–21 (GHVDAGKS) are G1. 14–21 (GHVDAGKS) serves as a coordination point for GTP. Residue Ser21 participates in Mg(2+) binding. A G2 region spans residues 70–74 (GVTID). The segment at 91-94 (DCPG) is G3. GTP-binding positions include 91 to 95 (DCPGH) and 149 to 152 (NKMD). Residues 149–152 (NKMD) form a G4 region. A G5 region spans residues 189 to 191 (ASL).

Belongs to the TRAFAC class translation factor GTPase superfamily. Classic translation factor GTPase family. EF-Tu/EF-1A subfamily.

It is found in the cytoplasm. It carries out the reaction GTP + H2O = GDP + phosphate + H(+). Functionally, GTP hydrolase that promotes the GTP-dependent binding of aminoacyl-tRNA to the A-site of ribosomes during protein biosynthesis. The polypeptide is Elongation factor 1-alpha (Methanococcus vannielii (strain ATCC 35089 / DSM 1224 / JCM 13029 / OCM 148 / SB)).